We begin with the raw amino-acid sequence, 145 residues long: Peptide methionine sulfoxide reductase MsrB (145 aa).

The region spanning 4–127 (KEELRQRIGD…NSAALKFIPY (124 aa)) is the MsrB domain. Cys-116 serves as the catalytic Nucleophile.

The protein belongs to the MsrB Met sulfoxide reductase family.

It carries out the reaction L-methionyl-[protein] + [thioredoxin]-disulfide + H2O = L-methionyl-(R)-S-oxide-[protein] + [thioredoxin]-dithiol. The chain is Peptide methionine sulfoxide reductase MsrB from Streptococcus equi subsp. zooepidemicus (strain H70).